The sequence spans 137 residues: MVSSKWNMITELFLGAANSYAQMRGKITHYEIQHDGTIQHEFIDPSNTEEKAWDLEDNPEQQISVKGYANSCTLTVKDDSNEVELVPSGRYKQYMENQILSQTMQTGSMDSQKMMYLSIANLATLLLFGIIGLSIIT.

The chain crosses the membrane as a helical span at residues 116–136 (YLSIANLATLLLFGIIGLSII).

It is found in the host membrane. This is an uncharacterized protein from His1 virus (isolate Australia/Victoria) (His1V).